A 170-amino-acid polypeptide reads, in one-letter code: Phosphopantetheine adenylyltransferase (170 aa).

T10 provides a ligand contact to substrate. ATP is bound by residues 10–11 (TF) and H18. Residues K42, L75, and R89 each contribute to the substrate site. ATP-binding positions include 90–92 (GVR), E100, and 125–131 (YTYVASS).

It belongs to the bacterial CoaD family. Homohexamer. Mg(2+) serves as cofactor.

It is found in the cytoplasm. It catalyses the reaction (R)-4'-phosphopantetheine + ATP + H(+) = 3'-dephospho-CoA + diphosphate. It participates in cofactor biosynthesis; coenzyme A biosynthesis; CoA from (R)-pantothenate: step 4/5. Its function is as follows. Reversibly transfers an adenylyl group from ATP to 4'-phosphopantetheine, yielding dephospho-CoA (dPCoA) and pyrophosphate. This chain is Phosphopantetheine adenylyltransferase, found in Chlorobium limicola (strain DSM 245 / NBRC 103803 / 6330).